The chain runs to 162 residues: Cyclic pyranopterin monophosphate synthase (162 aa).

Residues 75–77 (LCH) and 113–114 (ME) each bind substrate. Asp-128 is a catalytic residue.

This sequence belongs to the MoaC family. As to quaternary structure, homohexamer; trimer of dimers.

It carries out the reaction (8S)-3',8-cyclo-7,8-dihydroguanosine 5'-triphosphate = cyclic pyranopterin phosphate + diphosphate. It participates in cofactor biosynthesis; molybdopterin biosynthesis. Functionally, catalyzes the conversion of (8S)-3',8-cyclo-7,8-dihydroguanosine 5'-triphosphate to cyclic pyranopterin monophosphate (cPMP). This Burkholderia ambifaria (strain ATCC BAA-244 / DSM 16087 / CCUG 44356 / LMG 19182 / AMMD) (Burkholderia cepacia (strain AMMD)) protein is Cyclic pyranopterin monophosphate synthase.